A 113-amino-acid chain; its full sequence is Seminal vesicle secretory protein 4 (113 aa).

The first 21 residues, 1 to 21 (MNSTSLFLFSLLLLLVTGAIG), serve as a signal peptide directing secretion. Residues 31-113 (SEETVRESFS…KSRFSQDALE (83 aa)) are disordered. Composition is skewed to low complexity over residues 38–50 (SFSMGSRGHMSRS) and 83–98 (IISSSSDGSNMEGESS).

This sequence belongs to the SVP2/SVP5/SVP6 family. Testis.

It localises to the secreted. The protein resides in the extracellular space. In Mus musculus (Mouse), this protein is Seminal vesicle secretory protein 4 (Svs4).